Consider the following 364-residue polypeptide: Chorismate synthase (364 aa).

R47 provides a ligand contact to NADP(+). Residues 124–126, G287, 302–306, and R328 contribute to the FMN site; these read RAS and KPTAT.

It belongs to the chorismate synthase family. Homotetramer. It depends on FMNH2 as a cofactor.

The enzyme catalyses 5-O-(1-carboxyvinyl)-3-phosphoshikimate = chorismate + phosphate. Its pathway is metabolic intermediate biosynthesis; chorismate biosynthesis; chorismate from D-erythrose 4-phosphate and phosphoenolpyruvate: step 7/7. Functionally, catalyzes the anti-1,4-elimination of the C-3 phosphate and the C-6 proR hydrogen from 5-enolpyruvylshikimate-3-phosphate (EPSP) to yield chorismate, which is the branch point compound that serves as the starting substrate for the three terminal pathways of aromatic amino acid biosynthesis. This reaction introduces a second double bond into the aromatic ring system. The chain is Chorismate synthase from Prochlorococcus marinus (strain MIT 9515).